A 191-amino-acid polypeptide reads, in one-letter code: UPF0312 protein Sden_2128 (191 aa).

Residues 1-22 (MKKHLLASLLGASLLLPTAVNA) form the signal peptide.

The protein belongs to the UPF0312 family. Type 1 subfamily.

The protein resides in the periplasm. This chain is UPF0312 protein Sden_2128, found in Shewanella denitrificans (strain OS217 / ATCC BAA-1090 / DSM 15013).